A 188-amino-acid polypeptide reads, in one-letter code: MNITATVLLAFGMSMDAFAASIGKGATLHKPKFSEALRTGLIFGAVETLTPLIGWGMGMLASRFVLEWNHWIAFVLLIFLGGRMIIEGIRGGDDEDEEPRRRHGFWLLVTTAIATSLDAMAVGVGLAFLQVNIIATALAIGCATLIMSTLGMMVGRFIGPILGKKAEILGGLVLIGIGVQILWTHFHG.

The next 5 membrane-spanning stretches (helical) occupy residues 3–23, 66–86, 106–128, 143–163, and 168–188; these read ITAT…ASIG, LEWN…RMII, WLLV…GLAF, ATLI…PILG, and ILGG…HFHG.

It belongs to the MntP (TC 9.B.29) family.

It is found in the cell inner membrane. Its function is as follows. Probably functions as a manganese efflux pump. This is Probable manganese efflux pump MntP from Escherichia fergusonii (strain ATCC 35469 / DSM 13698 / CCUG 18766 / IAM 14443 / JCM 21226 / LMG 7866 / NBRC 102419 / NCTC 12128 / CDC 0568-73).